Here is a 217-residue protein sequence, read N- to C-terminus: Biotin transport regulator (217 aa).

A disordered region spans residues 14-49 (GDGLGNLAGRSADPTGAADKGESGVPVPPTGFVDPT).

Its function is as follows. May be part of a system that R.meliloti uses to respond to plant (alfalfa) biotin signals. This is Biotin transport regulator (bioS) from Rhizobium meliloti (strain 1021) (Ensifer meliloti).